The primary structure comprises 292 residues: Acetylglutamate kinase (292 aa).

Substrate is bound by residues 72–73 (GG), R94, and N187.

It belongs to the acetylglutamate kinase family. ArgB subfamily.

The protein localises to the cytoplasm. The catalysed reaction is N-acetyl-L-glutamate + ATP = N-acetyl-L-glutamyl 5-phosphate + ADP. It functions in the pathway amino-acid biosynthesis; L-arginine biosynthesis; N(2)-acetyl-L-ornithine from L-glutamate: step 2/4. Functionally, catalyzes the ATP-dependent phosphorylation of N-acetyl-L-glutamate. This chain is Acetylglutamate kinase, found in Trichodesmium erythraeum (strain IMS101).